Consider the following 527-residue polypeptide: Aspartokinase (527 aa).

Residue T333 is modified to Phosphothreonine. Residues 442–527 (LVGKHMKQYI…RLEQLKRLGI (86 aa)) enclose the ACT domain.

It belongs to the aspartokinase family. As to quaternary structure, homohexamer. Interacts with FPR1; the interaction is direct, plays a role in feedback inhibition of aspartokinase by threonine, and inhibited by tacrolimus and sirolimus.

It catalyses the reaction L-aspartate + ATP = 4-phospho-L-aspartate + ADP. It functions in the pathway amino-acid biosynthesis; L-methionine biosynthesis via de novo pathway; L-homoserine from L-aspartate: step 1/3. The protein operates within amino-acid biosynthesis; L-threonine biosynthesis; L-threonine from L-aspartate: step 1/5. With respect to regulation, allosterically inhibited by threonine. Phosphorylates aspartate, the first step in the biosynthesis of amino acids that derive from aspartate (the aspartate family of amino acids), including methioinine and threonine, the latter of which is a precursor to isoleucine. In Saccharomyces cerevisiae (strain ATCC 204508 / S288c) (Baker's yeast), this protein is Aspartokinase (HOM3).